A 642-amino-acid chain; its full sequence is Epithelial sodium channel subunit alpha (642 aa).

At 1–81 (MHQVVTVKAE…VCSKRNKMKT (81 aa)) the chain is on the cytoplasmic side. The helical transmembrane segment at 82-102 (AFWSVLFFLTFGLMYWQFGIL) threads the bilayer. Residues 103-553 (YREYFSFPVN…NQWSLWFGSS (451 aa)) are Extracellular-facing. 10 disulfides stabilise this stretch: C130–C297, C222–C229, C274–C281, C385–C470, C407–C447, C407–C466, C411–C462, C420–C447, C420–C470, and C422–C436. The interval 170-209 (GAAQSSQKRSQRSLSHHVQRHPLRRRKRNEPVSLKGNSPP) is disordered. Basic residues predominate over residues 178 to 197 (RSQRSLSHHVQRHPLRRRKR). The chain crosses the membrane as a helical span at residues 554–574 (VLSVVELAELILDFIAITIIL). Topologically, residues 575-642 (SFKRFRSRQV…RDGEAVIGLE (68 aa)) are cytoplasmic. Positions 587-608 (PSVPPPGAHDNTAFQSEPADPS) are disordered.

It belongs to the amiloride-sensitive sodium channel (TC 1.A.6) family. SCNN1A subfamily. In terms of assembly, heterotrimer; disulfide-linked and containing an alpha/SCNN1A, a beta/SCNN1B and a gamma/SCNN1G subunit.

The protein resides in the apical cell membrane. It is found in the cell projection. Its subcellular location is the cilium. The protein localises to the cytoplasmic granule. It localises to the cytoplasm. The protein resides in the cytoplasmic vesicle. It is found in the secretory vesicle. Its subcellular location is the acrosome. The protein localises to the flagellum. The enzyme catalyses Na(+)(in) = Na(+)(out). Its activity is regulated as follows. Originally identified and characterized by its inhibition by the diuretic drug amiloride. Functionally, this is one of the three pore-forming subunits of the heterotrimeric epithelial sodium channel (ENaC), a critical regulator of sodium balance and fluid homeostasis. ENaC operates in epithelial tissues, where it mediates the electrodiffusion of sodium ions from extracellular fluid through the apical membrane of cells, with water following osmotically. This is Epithelial sodium channel subunit alpha from Pelodiscus sinensis (Chinese softshell turtle).